Consider the following 913-residue polypeptide: Protein SEY1 homolog (913 aa).

At 1–825 (MTDVNKTQII…ETGGHMSLKN (825 aa)) the chain is on the cytoplasmic side. One can recognise a GB1/RHD3-type G domain in the interval 33–288 (GFNYNVIAIL…IPADGFAQYC (256 aa)). 43–50 (GSQSSGKS) is a binding site for GTP. Residues 826 to 846 (VPFAFWVILLILGWNEILMFT) form a helical membrane-spanning segment. The Lumenal portion of the chain corresponds to 847–849 (RLF). Residues 850-870 (FRLNIILPMLIGFIIIVISCL) form a helical membrane-spanning segment. The Cytoplasmic portion of the chain corresponds to 871 to 913 (YTGNAQILSYINKIIFIVIKNLYNFYKHLQTIGHQTTKPEKVE).

This sequence belongs to the TRAFAC class dynamin-like GTPase superfamily. GB1/RHD3 GTPase family. RHD3 subfamily.

It localises to the endoplasmic reticulum membrane. In terms of biological role, probable GTP-binding protein involved in generating and maintaining the structure of the tubular endoplasmic reticulum network. The chain is Protein SEY1 homolog from Plasmodium berghei (strain Anka).